A 353-amino-acid chain; its full sequence is Protein disulfide isomerase CRELD2 (353 aa).

The N-terminal stretch at 1–24 (MRLPRRAALGLLPLLLLLPPAPEA) is a signal peptide. Positions 31 to 34 (CHRC) match the CXXC motif. Cystine bridges form between Cys31–Cys34, Cys140–Cys154, Cys148–Cys166, and Cys168–Cys177. An EGF-like 1 domain is found at 136 to 178 (DCLACQGGSQRPCSGNGHCSGDGSRQGDGSCRCHMGYQGPLCT). An FU 1 repeat occupies 193 to 240 (HSICTACDESCKTCSGLTNRDCGECEVGWVLDEGACVDVDECAAEPPP). A glycan (N-linked (GlcNAc...) asparagine) is linked at Asn251. An FU 2 repeat occupies 253–302 (SYTCEECDSSCVGCTGEGPGNCKECISGYAREHGQCADVDECSLAEKTCV). The CXXC motif lies at 263–266 (CVGC). Cystine bridges form between Cys263–Cys266, Cys294–Cys308, Cys301–Cys317, and Cys319–Cys330. The 42-residue stretch at 290–331 (DVDECSLAEKTCVRKNENCYNTPGSYVCVCPDGFEETEDACV) folds into the EGF-like 2; calcium-binding domain. Residues 332-353 (PPAEAEATEGESPTQLPSREDL) form a disordered region. The span at 342–353 (ESPTQLPSREDL) shows a compositional bias: polar residues.

Belongs to the CRELD family. Interacts with CHRNA4. Component of a complex containing at least CRELD2, MANF, MATN3 and PDIA4. In terms of tissue distribution, ubiquitously expressed. Highly expressed in skeletal muscle, heart, liver, kidney and placenta.

It is found in the endoplasmic reticulum. The catalysed reaction is Catalyzes the rearrangement of -S-S- bonds in proteins.. Protein disulfide isomerase. Might play a role in the unfolded protein response. May regulate transport of alpha4-beta2 neuronal acetylcholine receptor. The sequence is that of Protein disulfide isomerase CRELD2 (CRELD2) from Homo sapiens (Human).